The sequence spans 1125 residues: MKVDELPIDERIKRVIKERGIEELYPPQAEALKSGVLEGKNLVLAIPTASGKTLVSEIVMVNKLLSEGGKAVYLVPLKALAEEKYREFKEWEVLGLRVAATTGDYDSTDEWLGRYDIIVATAEKFDSLLRHGASWIKDVKLVVADEVHLIGSYDRGATLEMILTHMLGKAQILALSATVGNAEELAEWLDASLVVSDWRPVELRKGVFHLGQLFWEDGKIDHYPENWESLVLDAVKKGKQALVFVNTRRSAEKEAISLSSKVSKLLTKPETRRLEELISSIEDNPTTEKLKRALKGGVAFHHAGLSRAERTLIEDAFRNGLIKVITATPTLCMHPDTYVVTKSGAKKVSELTEGDEVLTHTGTFKKVIQPLRREHKGRLLVIKAYGTVPVKITPEHMVWVVKQIRHKSHYSDGRQVIWWEFEGPEWMTAQELKERLESETDPKVSYMLLQPIPEPSVDADKIPLRKEVYVVNQHGKTDKLHPSVKRTPEYLPLNFETARLIGLWIAEGSTSKNGVIKFDISSNEEDLTEFITGTIRKYFPHAKIVVKDHERNRRTVRFCNKRFAEWLRENIGHGADNKSIPPLLLLNKNREVRLGLLRGLIEGDGYVRRESQRRANYISYSTVSPSLAYQLQLLVASLGYTSSIHRSIRTEGIGKTRKPIYDVKVSGKSYYSLLEELGFEVPQRGNRTYNVNRTWKNYLLLKVRSIEEEEYEGDVYNLEVEGDESYSVGFIVHNSAGINLPAFRVIIRDTKRYANFGWTDIPVLEIQQMMGRAGRPKYDKVGEAIIVARTEDPKKLIDRYIHGKPEKLFSMLANEQAFRSQVLALITNFGVEDFRELVDFLSRTFYAHQRGDTSSLEYKAKDIVYFLIENEFIDMDVENRFIALPFGRRTSQLYIDPLTAKKFKDAFPAIERNPNPFGIFQLLASTPDMATLTARRREMEDYLDLAYEMEEHLYSSIPYYEDSRFQGFLGQVKTAKVLLDWINEVPEARIYETYNIDPGDLYRILELADWLMYSLIELYKLFEPKEDVLQYLRDLHLRLRHGVREELLELVKLPNIGRRRARALYNAGFRSVEDILRAKPKDLLQVEGIGLKIIEGIYRHLGVEYTISEKEKPKKRKGNLYDFLK.

The Q motif signature appears at Met-1–Ala-29. ATP-binding positions include Gln-28 and Ile-46–Thr-53. The Helicase ATP-binding domain occupies Lys-33–Asp-197. Residues Asp-145–His-148 carry the DEAH box motif. The region spanning Asn-226–Thr-440 is the Helicase C-terminal domain. Residues Leu-500–Tyr-640 enclose the DOD-type homing endonuclease domain.

Belongs to the helicase family. Hel308 subfamily. As to quaternary structure, monomer. Post-translationally, this protein undergoes a protein self splicing that involves a post-translational excision of the intervening region (intein) followed by peptide ligation.

The catalysed reaction is Couples ATP hydrolysis with the unwinding of duplex DNA by translocating in the 3'-5' direction.. The enzyme catalyses ATP + H2O = ADP + phosphate + H(+). In terms of biological role, DNA-dependent ATPase and 3'-5' DNA helicase that may be involved in repair of stalled replication forks. This Thermococcus kodakarensis (strain ATCC BAA-918 / JCM 12380 / KOD1) (Pyrococcus kodakaraensis (strain KOD1)) protein is ATP-dependent DNA helicase Hel308.